The chain runs to 386 residues: Lipid-A-disaccharide synthase (386 aa).

This sequence belongs to the LpxB family.

The enzyme catalyses a lipid X + a UDP-2-N,3-O-bis[(3R)-3-hydroxyacyl]-alpha-D-glucosamine = a lipid A disaccharide + UDP + H(+). The protein operates within bacterial outer membrane biogenesis; LPS lipid A biosynthesis. Condensation of UDP-2,3-diacylglucosamine and 2,3-diacylglucosamine-1-phosphate to form lipid A disaccharide, a precursor of lipid A, a phosphorylated glycolipid that anchors the lipopolysaccharide to the outer membrane of the cell. The chain is Lipid-A-disaccharide synthase from Chromobacterium violaceum (strain ATCC 12472 / DSM 30191 / JCM 1249 / CCUG 213 / NBRC 12614 / NCIMB 9131 / NCTC 9757 / MK).